The chain runs to 200 residues: Prolactin-2 (200 aa).

Positions 1-23 (MRQRRISGSNLMMVLCVVAMCRA) are cleaved as a signal peptide. 2 cysteine pairs are disulfide-bonded: Cys64/Cys173 and Cys190/Cys200.

Belongs to the somatotropin/prolactin family.

It is found in the secreted. In Oreochromis mossambicus (Mozambique tilapia), this protein is Prolactin-2 (prl2).